The following is a 341-amino-acid chain: L-threonine 3-dehydrogenase (341 aa).

A Zn(2+)-binding site is contributed by Cys-38. Residues Thr-40 and His-43 each act as charge relay system in the active site. The Zn(2+) site is built by His-63, Glu-64, Cys-93, Cys-96, Cys-99, and Cys-107. NAD(+)-binding positions include Ile-175, Asp-195, Arg-200, 262–264, and 286–287; these read LGI and IY.

The protein belongs to the zinc-containing alcohol dehydrogenase family. In terms of assembly, homotetramer. Zn(2+) serves as cofactor.

It is found in the cytoplasm. It catalyses the reaction L-threonine + NAD(+) = (2S)-2-amino-3-oxobutanoate + NADH + H(+). Its pathway is amino-acid degradation; L-threonine degradation via oxydo-reductase pathway; glycine from L-threonine: step 1/2. Its function is as follows. Catalyzes the NAD(+)-dependent oxidation of L-threonine to 2-amino-3-ketobutyrate. The polypeptide is L-threonine 3-dehydrogenase (Escherichia coli O17:K52:H18 (strain UMN026 / ExPEC)).